A 277-amino-acid chain; its full sequence is Isoprenyl transferase 1 (277 aa).

Positions M1 to G30 are disordered. Residue D42 is part of the active site. Residue D42 participates in Mg(2+) binding. Substrate contacts are provided by residues G43 to R46, W47, R55, H59, and S87 to E89. N90 (proton acceptor) is an active-site residue. Residues W91, R93, R210, and R216–S218 each bind substrate. E229 is a binding site for Mg(2+).

The protein belongs to the UPP synthase family. In terms of assembly, homodimer. Requires Mg(2+) as cofactor.

Catalyzes the condensation of isopentenyl diphosphate (IPP) with allylic pyrophosphates generating different type of terpenoids. The sequence is that of Isoprenyl transferase 1 from Streptomyces coelicolor (strain ATCC BAA-471 / A3(2) / M145).